The following is a 68-amino-acid chain: Ribosome modulation factor (68 aa).

It belongs to the ribosome modulation factor family.

The protein localises to the cytoplasm. During stationary phase, converts 70S ribosomes to an inactive dimeric form (100S ribosomes). In Alcanivorax borkumensis (strain ATCC 700651 / DSM 11573 / NCIMB 13689 / SK2), this protein is Ribosome modulation factor.